Reading from the N-terminus, the 570-residue chain is Zona pellucida sperm-binding protein 4 (570 aa).

The first 19 residues, 1–19, serve as a signal peptide directing secretion; that stretch reads MWLLQPLLLCVPLSLAVHG. The Extracellular segment spans residues 20 to 545; the sequence is QQKPQVPDYP…SSSPIDSQAL (526 aa). Residue Asn-68 is glycosylated (N-linked (GlcNAc...) asparagine). The P-type domain maps to 177–218; the sequence is DLCDSVPKWDRLPCASSPITQGDCNKLGCCYKSEANSCYYGN. The region spanning 223–496 is the ZP domain; that stretch reads RCTQDGHFSI…SSCRITCPVA (274 aa). Residue Asn-237 is glycosylated (N-linked (GlcNAc...) asparagine). Thr-337 carries O-linked (GalNAc...) threonine glycosylation. A disulfide bridge connects residues Cys-402 and Cys-476. N-linked (GlcNAc...) asparagine glycosylation is found at Asn-477 and Asn-535. Residues 497 to 570 constitute a propeptide, removed in mature form; it reads RRRRHSDLHH…VSYLAIRKRR (74 aa). The helical transmembrane segment at 546-566 threads the bilayer; that stretch reads WMAGLSGTLIFGFLLVSYLAI. At 567–570 the chain is on the cytoplasmic side; it reads RKRR.

This sequence belongs to the ZP domain family. ZPB subfamily. Proteolytically cleaved before the transmembrane segment to yield the secreted ectodomain incorporated in the zona pellucida. In terms of tissue distribution, expressed in oocytes.

The protein localises to the zona pellucida. It is found in the cell membrane. In terms of biological role, component of the zona pellucida, an extracellular matrix surrounding oocytes which mediates sperm binding, induction of the acrosome reaction and prevents post-fertilization polyspermy. The zona pellucida is composed of 3 to 4 glycoproteins, ZP1, ZP2, ZP3, and ZP4. ZP4 may act as a sperm receptor. This is Zona pellucida sperm-binding protein 4 (ZP4) from Felis catus (Cat).